The primary structure comprises 331 residues: Neurogenic differentiation factor 4 (331 aa).

A disordered region spans residues 1–80 (MSKTFVKSKE…GPKKKKMTKA (80 aa)). A compositionally biased stretch (acidic residues) spans 52 to 64 (DSIEEEEEEEEDG). Residues 67–79 (PKRRGPKKKKMTK) show a composition bias toward basic residues. The bHLH domain occupies 87–139 (ARRVKANARERTRMHGLNDALDNLRRVMPCYSKTQKLSKIETLRLARNYIWAL). A disordered region spans residues 246 to 265 (TPPYEGPLTPPLSISGNFSL).

Efficient DNA binding requires dimerization with another bHLH protein. Serine or threonine phosphorylation within the basic region may regulate neurogenic activity.

The protein localises to the nucleus. In terms of biological role, probably acts as a transcriptional activator. Mediates neuronal differentiation. Required for the regulation of amacrine cell fate specification in the retina. This chain is Neurogenic differentiation factor 4 (NEUROD4), found in Homo sapiens (Human).